We begin with the raw amino-acid sequence, 258 residues long: uncharacterized protein (258 aa).

36–43 (GKAGTGKS) is an ATP binding site.

Belongs to the IIV-6 075L family.

This is an uncharacterized protein from Acheta domesticus (House cricket).